A 261-amino-acid chain; its full sequence is Small ribosomal subunit protein uS2 (261 aa).

Residues 224–261 (GRQGEDDEAVQQEEVAEGVSKDSLEDLKKTVEEGSNEE) are disordered. The segment covering 228–239 (EDDEAVQQEEVA) has biased composition (acidic residues). The span at 242 to 255 (VSKDSLEDLKKTVE) shows a compositional bias: basic and acidic residues.

It belongs to the universal ribosomal protein uS2 family.

The chain is Small ribosomal subunit protein uS2 (rpsB) from Pediococcus acidilactici.